A 97-amino-acid chain; its full sequence is Small ribosomal subunit protein bS16c (97 aa).

This sequence belongs to the bacterial ribosomal protein bS16 family.

The protein localises to the plastid. It is found in the chloroplast. This Piper cenocladum (Ant piper) protein is Small ribosomal subunit protein bS16c.